Here is a 184-residue protein sequence, read N- to C-terminus: 20.9 kDa protein (184 aa).

In Zymomonas mobilis subsp. mobilis (strain ATCC 10988 / DSM 424 / LMG 404 / NCIMB 8938 / NRRL B-806 / ZM1), this protein is 20.9 kDa protein.